The following is a 622-amino-acid chain: Wall-associated receptor kinase-like 21 (622 aa).

A signal peptide spans 1-21 (MAETPQPYLIFVFFVFTLTVA). Residues 22-247 (TQTTGSVKCK…LVYKRKGLHK (226 aa)) lie on the Extracellular side of the membrane. N-linked (GlcNAc...) asparagine glycans are attached at residues asparagine 50, asparagine 114, asparagine 131, asparagine 160, and asparagine 195. Residues 248–268 (LVVLGTAGILVGVLVIVVLIA) traverse the membrane as a helical segment. The Cytoplasmic portion of the chain corresponds to 269-622 (TYFFRNKQSA…MKRQQSFPRE (354 aa)). A Protein kinase domain is found at 314–594 (FSDKNMLGTG…EITEDLHRIK (281 aa)). Residues 320-328 (LGTGAYGTV) and lysine 342 contribute to the ATP site. Aspartate 439 serves as the catalytic Proton acceptor.

This sequence belongs to the protein kinase superfamily. Ser/Thr protein kinase family.

It is found in the membrane. The catalysed reaction is L-seryl-[protein] + ATP = O-phospho-L-seryl-[protein] + ADP + H(+). It catalyses the reaction L-threonyl-[protein] + ATP = O-phospho-L-threonyl-[protein] + ADP + H(+). Functionally, serine/threonine-protein kinase that may function as a signaling receptor of extracellular matrix component. The protein is Wall-associated receptor kinase-like 21 (WAKL21) of Arabidopsis thaliana (Mouse-ear cress).